Here is a 116-residue protein sequence, read N- to C-terminus: Large ribosomal subunit protein uL22c (116 aa).

It belongs to the universal ribosomal protein uL22 family. Part of the 50S ribosomal subunit.

It is found in the plastid. The protein resides in the chloroplast. In terms of biological role, this protein binds specifically to 23S rRNA. Its function is as follows. The globular domain of the protein is located near the polypeptide exit tunnel on the outside of the subunit, while an extended beta-hairpin is found that lines the wall of the exit tunnel in the center of the 70S ribosome. This chain is Large ribosomal subunit protein uL22c (rpl22), found in Porphyra purpurea (Red seaweed).